We begin with the raw amino-acid sequence, 42 residues long: Photosystem I reaction center subunit IX (42 aa).

A helical transmembrane segment spans residues 8 to 28; sequence YLSTAPVIGVLWMTFTAGFII.

Belongs to the PsaJ family.

The protein localises to the plastid. The protein resides in the chloroplast thylakoid membrane. Its function is as follows. May help in the organization of the PsaE and PsaF subunits. This is Photosystem I reaction center subunit IX from Pyropia yezoensis (Susabi-nori).